The chain runs to 172 residues: 3-hydroxydecanoyl-[acyl-carrier-protein] dehydratase (172 aa).

H71 is an active-site residue.

The protein belongs to the thioester dehydratase family. FabA subfamily. Homodimer.

It localises to the cytoplasm. It catalyses the reaction a (3R)-hydroxyacyl-[ACP] = a (2E)-enoyl-[ACP] + H2O. It carries out the reaction (3R)-hydroxydecanoyl-[ACP] = (2E)-decenoyl-[ACP] + H2O. The catalysed reaction is (2E)-decenoyl-[ACP] = (3Z)-decenoyl-[ACP]. It participates in lipid metabolism; fatty acid biosynthesis. In terms of biological role, necessary for the introduction of cis unsaturation into fatty acids. Catalyzes the dehydration of (3R)-3-hydroxydecanoyl-ACP to E-(2)-decenoyl-ACP and then its isomerization to Z-(3)-decenoyl-ACP. Can catalyze the dehydratase reaction for beta-hydroxyacyl-ACPs with saturated chain lengths up to 16:0, being most active on intermediate chain length. This is 3-hydroxydecanoyl-[acyl-carrier-protein] dehydratase from Enterobacter sp. (strain 638).